We begin with the raw amino-acid sequence, 445 residues long: Phosphoglucosamine mutase (445 aa).

Serine 102 (phosphoserine intermediate) is an active-site residue. Mg(2+)-binding residues include serine 102, aspartate 241, aspartate 243, and aspartate 245. Position 102 is a phosphoserine (serine 102).

It belongs to the phosphohexose mutase family. The cofactor is Mg(2+). Post-translationally, activated by phosphorylation.

It carries out the reaction alpha-D-glucosamine 1-phosphate = D-glucosamine 6-phosphate. Catalyzes the conversion of glucosamine-6-phosphate to glucosamine-1-phosphate. The sequence is that of Phosphoglucosamine mutase from Serratia proteamaculans (strain 568).